The primary structure comprises 834 residues: Glycerol-3-phosphate acyltransferase (834 aa).

An HXXXXD motif motif is present at residues 309–314 (CHRSHI).

It belongs to the GPAT/DAPAT family.

Its subcellular location is the cell inner membrane. It catalyses the reaction sn-glycerol 3-phosphate + an acyl-CoA = a 1-acyl-sn-glycero-3-phosphate + CoA. The protein operates within phospholipid metabolism; CDP-diacylglycerol biosynthesis; CDP-diacylglycerol from sn-glycerol 3-phosphate: step 1/3. The sequence is that of Glycerol-3-phosphate acyltransferase from Pseudomonas paraeruginosa (strain DSM 24068 / PA7) (Pseudomonas aeruginosa (strain PA7)).